The following is a 325-amino-acid chain: tRNA U34 carboxymethyltransferase (325 aa).

Positions 93, 107, 112, 132, 198, 202, and 317 each coordinate carboxy-S-adenosyl-L-methionine.

This sequence belongs to the class I-like SAM-binding methyltransferase superfamily. CmoB family. As to quaternary structure, homotetramer.

It carries out the reaction carboxy-S-adenosyl-L-methionine + 5-hydroxyuridine(34) in tRNA = 5-carboxymethoxyuridine(34) in tRNA + S-adenosyl-L-homocysteine + H(+). Catalyzes carboxymethyl transfer from carboxy-S-adenosyl-L-methionine (Cx-SAM) to 5-hydroxyuridine (ho5U) to form 5-carboxymethoxyuridine (cmo5U) at position 34 in tRNAs. The protein is tRNA U34 carboxymethyltransferase of Desulforapulum autotrophicum (strain ATCC 43914 / DSM 3382 / VKM B-1955 / HRM2) (Desulfobacterium autotrophicum).